Consider the following 285-residue polypeptide: Chitinase 4 (285 aa).

The signal sequence occupies residues 1–27 (MAAKMATMVALVFGLALLLSAAAPAAA). Residues 28-62 (QNCGCQDGYCCSQWGYCGTTEAYCGQGCQSGPCWG) form the Chitin-binding type-1 domain. 7 disulfide bridges follow: Cys-30-Cys-38, Cys-32-Cys-44, Cys-37-Cys-51, Cys-55-Cys-60, Cys-104-Cys-153, Cys-166-Cys-175, and Cys-253-Cys-285. The active-site Proton donor is Glu-148.

The protein belongs to the glycosyl hydrolase 19 family. Chitinase class IV subfamily. Expressed at low levels in leaves, sheaths and meristems.

It carries out the reaction Random endo-hydrolysis of N-acetyl-beta-D-glucosaminide (1-&gt;4)-beta-linkages in chitin and chitodextrins.. In terms of biological role, hydrolyzes chitin and may function in reproductive organs during embryogenesis and seed maturation. This is Chitinase 4 (Cht4) from Oryza sativa subsp. japonica (Rice).